Here is a 367-residue protein sequence, read N- to C-terminus: 3-dehydroquinate synthase (367 aa).

NAD(+)-binding positions include 69–74 (DGEAFK), 103–107 (GVIGD), 127–128 (TT), Lys140, and Lys149. Zn(2+) contacts are provided by Glu182, His245, and His262.

It belongs to the sugar phosphate cyclases superfamily. Dehydroquinate synthase family. It depends on Co(2+) as a cofactor. Zn(2+) is required as a cofactor. Requires NAD(+) as cofactor.

It localises to the cytoplasm. The catalysed reaction is 7-phospho-2-dehydro-3-deoxy-D-arabino-heptonate = 3-dehydroquinate + phosphate. It functions in the pathway metabolic intermediate biosynthesis; chorismate biosynthesis; chorismate from D-erythrose 4-phosphate and phosphoenolpyruvate: step 2/7. Its function is as follows. Catalyzes the conversion of 3-deoxy-D-arabino-heptulosonate 7-phosphate (DAHP) to dehydroquinate (DHQ). The chain is 3-dehydroquinate synthase from Pseudomonas syringae pv. syringae (strain B728a).